The sequence spans 278 residues: Large ribosomal subunit protein uL2 (278 aa).

Disordered stretches follow at residues 28-56 and 221-278; these read KPVKALTEGKRKSGGRNNQGHATARGIAG and RGVA…KKKR. Residues 269–278 show a composition bias toward basic residues; the sequence is IRSRHAKKKR.

Belongs to the universal ribosomal protein uL2 family. Part of the 50S ribosomal subunit. Forms a bridge to the 30S subunit in the 70S ribosome.

Its function is as follows. One of the primary rRNA binding proteins. Required for association of the 30S and 50S subunits to form the 70S ribosome, for tRNA binding and peptide bond formation. It has been suggested to have peptidyltransferase activity; this is somewhat controversial. Makes several contacts with the 16S rRNA in the 70S ribosome. The polypeptide is Large ribosomal subunit protein uL2 (Rhizorhabdus wittichii (strain DSM 6014 / CCUG 31198 / JCM 15750 / NBRC 105917 / EY 4224 / RW1) (Sphingomonas wittichii)).